A 193-amino-acid polypeptide reads, in one-letter code: Potassium-transporting ATPase KdpC subunit (193 aa).

A helical membrane pass occupies residues 14–34 (ITFTFLVLCGLVYPLIVTGIA).

This sequence belongs to the KdpC family. The system is composed of three essential subunits: KdpA, KdpB and KdpC.

Its subcellular location is the cell membrane. Part of the high-affinity ATP-driven potassium transport (or Kdp) system, which catalyzes the hydrolysis of ATP coupled with the electrogenic transport of potassium into the cytoplasm. This subunit acts as a catalytic chaperone that increases the ATP-binding affinity of the ATP-hydrolyzing subunit KdpB by the formation of a transient KdpB/KdpC/ATP ternary complex. This is Potassium-transporting ATPase KdpC subunit from Bacillus cereus (strain B4264).